A 308-amino-acid polypeptide reads, in one-letter code: Ribosomal RNA small subunit methyltransferase H (308 aa).

Residues Gly-36–His-38, Asp-55, Phe-82, Asp-103, and Gln-110 contribute to the S-adenosyl-L-methionine site.

The protein belongs to the methyltransferase superfamily. RsmH family.

The protein localises to the cytoplasm. The enzyme catalyses cytidine(1402) in 16S rRNA + S-adenosyl-L-methionine = N(4)-methylcytidine(1402) in 16S rRNA + S-adenosyl-L-homocysteine + H(+). Its function is as follows. Specifically methylates the N4 position of cytidine in position 1402 (C1402) of 16S rRNA. This chain is Ribosomal RNA small subunit methyltransferase H, found in Helicobacter pylori (strain ATCC 700392 / 26695) (Campylobacter pylori).